We begin with the raw amino-acid sequence, 146 residues long: Ribosomal RNA large subunit methyltransferase H (146 aa).

S-adenosyl-L-methionine is bound by residues Leu-62, Gly-94, and 113–118 (LGELTL).

It belongs to the RNA methyltransferase RlmH family. As to quaternary structure, homodimer.

The protein localises to the cytoplasm. The enzyme catalyses pseudouridine(1915) in 23S rRNA + S-adenosyl-L-methionine = N(3)-methylpseudouridine(1915) in 23S rRNA + S-adenosyl-L-homocysteine + H(+). In terms of biological role, specifically methylates the pseudouridine at position 1915 (m3Psi1915) in 23S rRNA. This chain is Ribosomal RNA large subunit methyltransferase H, found in Deinococcus radiodurans (strain ATCC 13939 / DSM 20539 / JCM 16871 / CCUG 27074 / LMG 4051 / NBRC 15346 / NCIMB 9279 / VKM B-1422 / R1).